Here is a 603-residue protein sequence, read N- to C-terminus: ATP-dependent RNA helicase MRH4, mitochondrial (603 aa).

The N-terminal 71 residues, 1–71 (MISTGLPLFT…GNGAGAGARV (71 aa)), are a transit peptide targeting the mitochondrion. A Q motif motif is present at residues 151–158 (VIKPTPVQ). Positions 193 to 409 (KNEEQKTKIF…LRLFPDQKSL (217 aa)) constitute a Helicase ATP-binding domain. ATP is bound at residue 206–213 (AETGSGKT). The DEAD box signature appears at 357 to 360 (DEAD). Positions 443–603 (CLAQAIYAIS…SAIMKGSRIG (161 aa)) constitute a Helicase C-terminal domain.

It belongs to the DEAD box helicase family. MRH4 subfamily.

It localises to the mitochondrion. The enzyme catalyses ATP + H2O = ADP + phosphate + H(+). In terms of biological role, ATP-binding RNA helicase involved in mitochondrial RNA metabolism. Required for maintenance of mitochondrial DNA. The chain is ATP-dependent RNA helicase MRH4, mitochondrial (MRH4) from Lodderomyces elongisporus (strain ATCC 11503 / CBS 2605 / JCM 1781 / NBRC 1676 / NRRL YB-4239) (Yeast).